The following is a 431-amino-acid chain: Serine--tRNA ligase (431 aa).

Position 238 to 240 (238 to 240) interacts with L-serine; it reads TAE. ATP is bound at residue 269-271; that stretch reads RSE. E292 contributes to the L-serine binding site. ATP is bound at residue 356–359; that stretch reads EISS. S392 is a binding site for L-serine.

It belongs to the class-II aminoacyl-tRNA synthetase family. Type-1 seryl-tRNA synthetase subfamily. In terms of assembly, homodimer. The tRNA molecule binds across the dimer.

Its subcellular location is the cytoplasm. It carries out the reaction tRNA(Ser) + L-serine + ATP = L-seryl-tRNA(Ser) + AMP + diphosphate + H(+). The catalysed reaction is tRNA(Sec) + L-serine + ATP = L-seryl-tRNA(Sec) + AMP + diphosphate + H(+). It functions in the pathway aminoacyl-tRNA biosynthesis; selenocysteinyl-tRNA(Sec) biosynthesis; L-seryl-tRNA(Sec) from L-serine and tRNA(Sec): step 1/1. Catalyzes the attachment of serine to tRNA(Ser). Is also able to aminoacylate tRNA(Sec) with serine, to form the misacylated tRNA L-seryl-tRNA(Sec), which will be further converted into selenocysteinyl-tRNA(Sec). The chain is Serine--tRNA ligase from Pectobacterium atrosepticum (strain SCRI 1043 / ATCC BAA-672) (Erwinia carotovora subsp. atroseptica).